A 473-amino-acid chain; its full sequence is Putative BTB/POZ domain-containing protein R765 (473 aa).

The BTB domain maps to 2–72 (TNIQLVIKDD…KIYDREITAD (71 aa)).

Belongs to the mimivirus BTB/WD family.

In Acanthamoeba polyphaga mimivirus (APMV), this protein is Putative BTB/POZ domain-containing protein R765.